A 1578-amino-acid chain; its full sequence is Neurexin-3 (1578 aa).

The signal sequence occupies residues 1-27; sequence MSFTLHSVFFTLKVSSFLGSLVGLCLG. The region spanning 28–202 is the Laminin G-like 1 domain; sequence LEFMGLPNQW…SVQLEAEGPC (175 aa). At 28–1503 the chain is on the extracellular side; the sequence is LEFMGLPNQW…EVIRESNSTT (1476 aa). 2 N-linked (GlcNAc...) asparagine glycosylation sites follow: asparagine 58 and asparagine 105. Positions 198 to 235 constitute an EGF-like 1 domain; it reads AEGPCGERPCENGGICFLLDGHPTCDCSTTGYGGTLCS. Disulfide bonds link cysteine 202–cysteine 213, cysteine 207–cysteine 222, and cysteine 224–cysteine 234. 2 consecutive Laminin G-like domains span residues 260-444 and 451-643; these read ENVA…VFKC and DPIN…KSSC. Aspartate 308, leucine 325, and methionine 378 together coordinate Ca(2+). 5 disulfide bridges follow: cysteine 408–cysteine 444, cysteine 614–cysteine 643, cysteine 651–cysteine 662, cysteine 656–cysteine 671, and cysteine 673–cysteine 683. The 38-residue stretch at 647-684 folds into the EGF-like 2 domain; it reads SAKQCDSYPCKNNAVCKDGWNRFICDCTGTGYWGRTCE. Laminin G-like domains are found at residues 689–861 and 875–1050; these read ILSY…IDYC and DPVT…DRGC. Positions 736 and 753 each coordinate Ca(2+). An N-linked (GlcNAc...) asparagine glycan is attached at asparagine 761. A Ca(2+)-binding site is contributed by arginine 811. Disulfide bonds link cysteine 1022/cysteine 1050, cysteine 1057/cysteine 1068, cysteine 1062/cysteine 1077, and cysteine 1079/cysteine 1089. An EGF-like 3 domain is found at 1053–1090; it reads PSTTCQEDSCANQGVCMQQWEGFTCDCSMTSYSGNQCN. Residues 1094–1294 enclose the Laminin G-like 6 domain; sequence ATYIFGKSGG…NPNIKINGSV (201 aa). Aspartate 1146 and isoleucine 1163 together coordinate Ca(2+). N-linked (GlcNAc...) asparagine glycosylation is present at asparagine 1193. Ca(2+)-binding residues include isoleucine 1245 and asparagine 1247. Residues asparagine 1291 and asparagine 1335 are each glycosylated (N-linked (GlcNAc...) asparagine). Positions 1328–1352 are disordered; that stretch reads ATTTTRKNRSTASIQPTSDDLVSSA. Residues 1337–1352 show a composition bias toward polar residues; it reads STASIQPTSDDLVSSA. O-linked (Xyl...) (heparan sulfate) serine glycosylation occurs at serine 1351. Residue asparagine 1500 is glycosylated (N-linked (GlcNAc...) asparagine). The helical transmembrane segment at 1504 to 1524 threads the bilayer; that stretch reads GMVVGIVAAAALCILILLYAM. Topologically, residues 1525-1578 are cytoplasmic; the sequence is YKYRNRDEGSYQVDETRNYISNSAQSNGTLMKEKQASSKSGHKKQKNKDKEYYV. The interval 1546-1578 is disordered; sequence NSAQSNGTLMKEKQASSKSGHKKQKNKDKEYYV.

It belongs to the neurexin family. As to quaternary structure, the laminin G-like domain 2 binds to NXPH1. Isoform 8/alpha-4B binds to alpha-dystroglycan. The cytoplasmic C-terminal region binds to CASK. Specific isoforms bind neuroligins NLGN1, NLGN2 and NLGN3. Interacts with CLSTN3. O-glycosylated; contains heparan sulfate. Heparan sulfate attachment is required for synapse development by mediating interactions with neuroligins. As to expression, brain.

It is found in the presynaptic cell membrane. Its function is as follows. Neuronal cell surface protein that may be involved in cell recognition and cell adhesion. May mediate intracellular signaling. This Rattus norvegicus (Rat) protein is Neurexin-3 (Nrxn3).